Here is a 104-residue protein sequence, read N- to C-terminus: Phosphoribosyl-ATP pyrophosphatase (104 aa).

Belongs to the PRA-PH family.

It is found in the cytoplasm. It catalyses the reaction 1-(5-phospho-beta-D-ribosyl)-ATP + H2O = 1-(5-phospho-beta-D-ribosyl)-5'-AMP + diphosphate + H(+). The protein operates within amino-acid biosynthesis; L-histidine biosynthesis; L-histidine from 5-phospho-alpha-D-ribose 1-diphosphate: step 2/9. This chain is Phosphoribosyl-ATP pyrophosphatase, found in Rhizobium rhizogenes (strain K84 / ATCC BAA-868) (Agrobacterium radiobacter).